We begin with the raw amino-acid sequence, 704 residues long: Elongation factor G (704 aa).

The tr-type G domain occupies 8–291; it reads DKVRNIGIMA…AVVEYLASPV (284 aa). Residues 17 to 24, 90 to 94, and 144 to 147 each bind GTP; these read AHIDAGKT, DTPGH, and NKMD.

It belongs to the TRAFAC class translation factor GTPase superfamily. Classic translation factor GTPase family. EF-G/EF-2 subfamily.

It is found in the cytoplasm. Its function is as follows. Catalyzes the GTP-dependent ribosomal translocation step during translation elongation. During this step, the ribosome changes from the pre-translocational (PRE) to the post-translocational (POST) state as the newly formed A-site-bound peptidyl-tRNA and P-site-bound deacylated tRNA move to the P and E sites, respectively. Catalyzes the coordinated movement of the two tRNA molecules, the mRNA and conformational changes in the ribosome. The protein is Elongation factor G of Pelodictyon phaeoclathratiforme (strain DSM 5477 / BU-1).